The chain runs to 732 residues: Myosin heavy chain kinase B (732 aa).

The Alpha-type protein kinase domain maps to 124–328 (DPYTTTAQWT…ICQYLNLQSI (205 aa)). 298-303 (GIGNLG) is a binding site for ATP. The segment at 331-428 (KSEKSDCGTV…TNKERSKSKS (98 aa)) is disordered. Over residues 356–394 (NNNNNNNNNNNNNNNNNNSNNNNNNNSSISKSLVEISSG) the composition is skewed to low complexity. Over residues 395-404 (SKERNDRDSP) the composition is skewed to basic and acidic residues. The segment covering 405–419 (SRQLFVSNDGNTLNT) has biased composition (polar residues). WD repeat units follow at residues 458–486 (KGYH…RVYD), 500–528 (GHEG…KVWD), 540–568 (GHDK…KVWD), 580–608 (SHAR…KVWD), 620–648 (GHTK…RVWN), 660–688 (GHDR…KIWD), and 700–730 (GHNA…RVWG).

This sequence belongs to the protein kinase superfamily. Alpha-type protein kinase family. ALPK subfamily.

The catalysed reaction is L-threonyl-[myosin heavy-chain] + ATP = O-phospho-L-threonyl-[myosin heavy-chain] + ADP + H(+). Catalyzes its autophosphorylation, which is needed for enzymatic activity and phosphorylates myosin II heavy chain at a threonine in the C-terminal tail region. This phosphorylation is critical in regulating the assembly and disassembly of myosin II filament. Participates in control of myosin localization. This Dictyostelium discoideum (Social amoeba) protein is Myosin heavy chain kinase B (mhkB).